The primary structure comprises 192 residues: Ribosome maturation factor RimM (192 aa).

Residues 116–192 enclose the PRC barrel domain; sequence PGEYYWVDLI…RIIVDWQPDY (77 aa).

The protein belongs to the RimM family. In terms of assembly, binds ribosomal protein uS19.

It localises to the cytoplasm. An accessory protein needed during the final step in the assembly of 30S ribosomal subunit, possibly for assembly of the head region. Essential for efficient processing of 16S rRNA. May be needed both before and after RbfA during the maturation of 16S rRNA. It has affinity for free ribosomal 30S subunits but not for 70S ribosomes. The polypeptide is Ribosome maturation factor RimM (Verminephrobacter eiseniae (strain EF01-2)).